The following is a 1100-amino-acid chain: Exportin-T (1100 aa).

Belongs to the exportin family. In terms of assembly, interacts with CEX1, GSP1, GSP2, NSP1, NUP2 and UTP8.

The protein resides in the nucleus. The protein localises to the cytoplasm. TRNA nucleus export receptor which facilitates tRNA translocation across the nuclear pore complex. Preferentially interacts with tRNAs with mature 5'- and 3'-termini and does not distinguish between intron-containing and spliced tRNAs. In the nucleus binds to tRNA and to the Ran-GTPases GSP1 or GSP2 in their active GTP-bound form. Docking of this trimeric complex to the nuclear pore complex (NPC) is mediated through binding to nucleoporins. Upon transit of a nuclear export complex into the cytoplasm, disassembling of the complex and hydrolysis of Ran-GTP to Ran-GDP cause release of the tRNA from the export receptor. The directionality of nuclear export is thought to be conferred by an asymmetric distribution of the GTP- and GDP-bound forms of Ran between the cytoplasm and nucleus. The polypeptide is Exportin-T (LOS1) (Saccharomyces cerevisiae (strain ATCC 204508 / S288c) (Baker's yeast)).